The sequence spans 140 residues: Lysozyme c-1 (140 aa).

The N-terminal stretch at 1 to 20 (MKVFSTVLLAIVACCAVAEA) is a signal peptide. The C-type lysozyme domain occupies 21–140 (KTFGKCELAK…KKLPNVSSCF (120 aa)). Disulfide bonds link Cys26/Cys139, Cys47/Cys128, Cys81/Cys94, and Cys90/Cys108. Catalysis depends on residues Glu52 and Asp69.

It belongs to the glycosyl hydrolase 22 family. In terms of tissue distribution, expressed in salivary glands and Malpighian tubules.

It carries out the reaction Hydrolysis of (1-&gt;4)-beta-linkages between N-acetylmuramic acid and N-acetyl-D-glucosamine residues in a peptidoglycan and between N-acetyl-D-glucosamine residues in chitodextrins.. Functionally, lysozymes have primarily a bacteriolytic function; those in tissues and body fluids are associated with the monocyte-macrophage system and enhance the activity of immunoagents. The protein is Lysozyme c-1 of Anopheles gambiae (African malaria mosquito).